The primary structure comprises 932 residues: MTNERKEVSEAPVNFGANLGLMLDLYDDFLQDPSSVPEDLQVLFSTIKNDDSIVPALKSTSSQNSDGTIKRVMRLIDNIRQYGHLKADIYPVNPPKRKHVPKLEIEDFDLDQQTLEGISAGIVSDHFADIYDNAYEAILRMEKRYKGPIAFEYTHINNNTERGWLKRRIETPYKVTLNNNEKRALFKQLAYVEGFEKYLHKNFVGAKRFSIEGVDALVPMLQRTITIAAKEGIKNIQIGMAHRGRLNVLTHVLEKPYEMMISEFMHTDPMKFLPEDGSLQLTAGWTGDVKYHLGGIKTTDSYGTMQRIALANNPSHLEIVAPVVEGRTRAAQDDTQRAGAPTTDHHKAMPIIIHGDAAYPGQGINFETMNLGNLKGYSTGGSLHIITNNRIGFTTEPIDARSTTYSTDVAKGYDVPIFHVNADDVEATIEAIDIAMEFRKEFHKDVVIDLVGYRRFGHNEMDEPSITNPVPYQNIRKHDSVEYVFGKKLVNEGVISEDEMHSFIEQVQKELRQAHDKINKADKMDNPDMEKPADLALPLQADEQSFTFDHLKEINDALLTYPDGFNILKKLNKVLEKRHEPFNKEDGLVDWAQAEQLAFATILQDGTPIRLTGQDSERGTFSHRHAVLHDEQTGETYTPLHHVPDQKATFDIHNSPLSEAAVVGFEYGYNVENKKSFNIWEAQYGDFANMSQMIFDNFLFSSRSKWGERSGLTLFLPHAYEGQGPEHSSARLERFLQLAAENNCTVVNLSSSSNYFHLLRAQAASLDSEQMRPLVVMSPKSLLRNKTVAKPIDEFTSGGFEPILTESYQADKVTKVILATGKMFIDLKEALAKNPDESVLLVAIERLYPFPEEEIEALLAQLPNLEEVSWVQEEPKNQGAWLYVYPYVKVLVADKYDLSYHGRIQRAAPAEGDGEIHKLVQNKIIENALKNN.

It belongs to the alpha-ketoglutarate dehydrogenase family. Homodimer. Part of the 2-oxoglutarate dehydrogenase (OGDH) complex composed of E1 (2-oxoglutarate dehydrogenase), E2 (dihydrolipoamide succinyltransferase) and E3 (dihydrolipoamide dehydrogenase); the complex contains multiple copies of the three enzymatic components (E1, E2 and E3). The cofactor is thiamine diphosphate.

The catalysed reaction is N(6)-[(R)-lipoyl]-L-lysyl-[protein] + 2-oxoglutarate + H(+) = N(6)-[(R)-S(8)-succinyldihydrolipoyl]-L-lysyl-[protein] + CO2. E1 component of the 2-oxoglutarate dehydrogenase (OGDH) complex which catalyzes the decarboxylation of 2-oxoglutarate, the first step in the conversion of 2-oxoglutarate to succinyl-CoA and CO(2). In Staphylococcus aureus (strain USA300), this protein is 2-oxoglutarate dehydrogenase E1 component.